Reading from the N-terminus, the 546-residue chain is Probable protein kinase UbiB (546 aa).

A Protein kinase domain is found at 124 to 502; the sequence is DFDITPLASA…RVKQGQSRYL (379 aa). ATP is bound by residues 130-138 and Lys-153; that span reads LASASIAQV. Asp-288 serves as the catalytic Proton acceptor. 2 helical membrane-spanning segments follow: residues 501-518 and 523-542; these read YLFG…LLFI and WGMS…LIGW.

It belongs to the ABC1 family. UbiB subfamily.

It is found in the cell inner membrane. It participates in cofactor biosynthesis; ubiquinone biosynthesis [regulation]. Is probably a protein kinase regulator of UbiI activity which is involved in aerobic coenzyme Q (ubiquinone) biosynthesis. The sequence is that of Probable protein kinase UbiB from Cronobacter sakazakii (strain ATCC BAA-894) (Enterobacter sakazakii).